Reading from the N-terminus, the 240-residue chain is Ribosomal RNA small subunit methyltransferase G (240 aa).

S-adenosyl-L-methionine is bound by residues glycine 78, phenylalanine 83, 129-130 (AE), and arginine 147. The interval 218–240 (RRQTSKKYPRKPGTPNKSPLLEN) is disordered.

It belongs to the methyltransferase superfamily. RNA methyltransferase RsmG family.

It localises to the cytoplasm. Its function is as follows. Specifically methylates the N7 position of guanine in position 535 of 16S rRNA. The chain is Ribosomal RNA small subunit methyltransferase G from Staphylococcus haemolyticus (strain JCSC1435).